Here is a 161-residue protein sequence, read N- to C-terminus: Protein yippee-like B0546.4 (161 aa).

The 98-residue stretch at 14-111 (SLYGCVVCNT…IENANFEKIA (98 aa)) folds into the Yippee domain. Residues cysteine 18, cysteine 21, cysteine 74, and cysteine 77 each coordinate Zn(2+). Residues 117–161 (PLGEDRQEAPPAPNLEMSRYPLEAEKKSRPQYRTVSVSSSSSAEC) are disordered. Residues 151-161 (VSVSSSSSAEC) show a composition bias toward low complexity.

It belongs to the yippee family.

The chain is Protein yippee-like B0546.4 from Caenorhabditis elegans.